Reading from the N-terminus, the 282-residue chain is HTH-type transcriptional activator RhaR (282 aa).

The region spanning 179–277 (DKLITALANS…GMTPSQWRHL (99 aa)) is the HTH araC/xylS-type domain. DNA-binding regions (H-T-H motif) lie at residues 196–217 (DAFC…RAQT) and 244–267 (ISEI…TRET).

Binds DNA as a dimer.

The protein localises to the cytoplasm. Functionally, activates expression of the rhaSR operon in response to L-rhamnose. The chain is HTH-type transcriptional activator RhaR from Salmonella arizonae (strain ATCC BAA-731 / CDC346-86 / RSK2980).